We begin with the raw amino-acid sequence, 465 residues long: Zinc finger CCCH domain-containing protein 58 (465 aa).

Residues 1 to 26 are disordered; that stretch reads MERYGGAGEDESRSDPSHEWSAQGTE. 3 consecutive C3H1-type zinc fingers follow at residues 51–79, 97–125, and 145–173; these read RPDE…HPRN, RMGQ…HPRQ, and RPGE…HPVP. 2 disordered regions span residues 173-200 and 274-302; these read PPGV…LQSQ and LSPS…QRPE. A compositionally biased stretch (low complexity) spans 177 to 191; sequence QAPSQQQQQQLSAGP. A compositionally biased stretch (polar residues) spans 283-298; the sequence is SGPSSTGVSNKEQTFP. 2 C3H1-type zinc fingers span residues 300–328 and 345–373; these read RPEQ…HPME and RPGA…HSLG. A compositionally biased stretch (low complexity) spans 397–431; sequence SLGTLAPSSSSDQCTELISSSSIEPITTTTGGSET. Residues 397-465 are disordered; the sequence is SLGTLAPSSS…SASNEAKTSS (69 aa). Residues 444–453 are compositionally biased toward basic and acidic residues; the sequence is SHPEPAETNK. Residues 454 to 465 are compositionally biased toward polar residues; the sequence is GDSASNEAKTSS.

The protein localises to the nucleus. The polypeptide is Zinc finger CCCH domain-containing protein 58 (Arabidopsis thaliana (Mouse-ear cress)).